Consider the following 158-residue polypeptide: 2-C-methyl-D-erythritol 2,4-cyclodiphosphate synthase (158 aa).

A divalent metal cation contacts are provided by aspartate 9 and histidine 11. 4-CDP-2-C-methyl-D-erythritol 2-phosphate contacts are provided by residues 9–11 (DVH) and 35–36 (HS). An a divalent metal cation-binding site is contributed by histidine 43. 4-CDP-2-C-methyl-D-erythritol 2-phosphate is bound by residues 57-59 (DLG), 62-66 (FPDTD), 133-136 (TTTE), phenylalanine 140, and arginine 143.

It belongs to the IspF family. Homotrimer. A divalent metal cation is required as a cofactor.

It carries out the reaction 4-CDP-2-C-methyl-D-erythritol 2-phosphate = 2-C-methyl-D-erythritol 2,4-cyclic diphosphate + CMP. It participates in isoprenoid biosynthesis; isopentenyl diphosphate biosynthesis via DXP pathway; isopentenyl diphosphate from 1-deoxy-D-xylulose 5-phosphate: step 4/6. Its function is as follows. Involved in the biosynthesis of isopentenyl diphosphate (IPP) and dimethylallyl diphosphate (DMAPP), two major building blocks of isoprenoid compounds. Catalyzes the conversion of 4-diphosphocytidyl-2-C-methyl-D-erythritol 2-phosphate (CDP-ME2P) to 2-C-methyl-D-erythritol 2,4-cyclodiphosphate (ME-CPP) with a corresponding release of cytidine 5-monophosphate (CMP). This chain is 2-C-methyl-D-erythritol 2,4-cyclodiphosphate synthase, found in Desulfitobacterium hafniense (strain DSM 10664 / DCB-2).